Here is a 538-residue protein sequence, read N- to C-terminus: Chaperonin GroEL 1 (538 aa).

Residues 29–32 (TLGP), 86–90 (DGTTT), G413, 478–480 (NAA), and D494 contribute to the ATP site.

It belongs to the chaperonin (HSP60) family. In terms of assembly, forms a cylinder of 14 subunits composed of two heptameric rings stacked back-to-back. Interacts with the co-chaperonin GroES.

Its subcellular location is the cytoplasm. It catalyses the reaction ATP + H2O + a folded polypeptide = ADP + phosphate + an unfolded polypeptide.. Together with its co-chaperonin GroES, plays an essential role in assisting protein folding. The GroEL-GroES system forms a nano-cage that allows encapsulation of the non-native substrate proteins and provides a physical environment optimized to promote and accelerate protein folding. The sequence is that of Chaperonin GroEL 1 from Corynebacterium glutamicum (strain R).